A 301-amino-acid chain; its full sequence is Hydroxymycolate synthase MmaA4 (301 aa).

S-adenosyl-L-methionine is bound by residues 42-43, 81-83, 103-108, 132-133, and Ile145; these read YS, GCG, TLSKNQ, and WE. Residue Cys278 is part of the active site.

It belongs to the CFA/CMAS family. Monomer.

The protein operates within lipid metabolism; mycolic acid biosynthesis. With respect to regulation, inhibited by S-adenosyl-N-decyl-aminoethyl (SADAE). In terms of biological role, involved in the biosynthesis of hydroxymycolate, a common precursor of oxygenated mycolic acids (methoxy-mycolate and keto-mycolate). Probably transfers a methyl group from the S-adenosylmethionine (SAM) cofactor and, subsequently or simultaneously, a water molecule onto the double bound of ethylene substrates, leading to the formation of the hydroxylated product at the distal position. Involved in the activation of the antitubercular drug thiacetazone (TAC). This Mycobacterium tuberculosis (strain ATCC 25618 / H37Rv) protein is Hydroxymycolate synthase MmaA4 (mmaA4).